Here is a 215-residue protein sequence, read N- to C-terminus: Ribonuclease T (215 aa).

Residues 20–194 (VVIDVETAGF…YDTERTAVLF (175 aa)) enclose the Exonuclease domain. Residues D23, E25, H181, and D186 each coordinate Mg(2+). Catalysis depends on H181, which acts as the Proton donor/acceptor.

It belongs to the RNase T family. As to quaternary structure, homodimer. Mg(2+) is required as a cofactor.

Functionally, trims short 3' overhangs of a variety of RNA species, leaving a one or two nucleotide 3' overhang. Responsible for the end-turnover of tRNA: specifically removes the terminal AMP residue from uncharged tRNA (tRNA-C-C-A). Also appears to be involved in tRNA biosynthesis. The protein is Ribonuclease T of Salmonella choleraesuis (strain SC-B67).